The primary structure comprises 356 residues: UDP-N-acetylglucosamine--N-acetylmuramyl-(pentapeptide) pyrophosphoryl-undecaprenol N-acetylglucosamine transferase (356 aa).

The UDP-N-acetyl-alpha-D-glucosamine site is built by S198 and Q289.

It belongs to the glycosyltransferase 28 family. MurG subfamily.

The protein resides in the cell membrane. The catalysed reaction is Mur2Ac(oyl-L-Ala-gamma-D-Glu-L-Lys-D-Ala-D-Ala)-di-trans,octa-cis-undecaprenyl diphosphate + UDP-N-acetyl-alpha-D-glucosamine = beta-D-GlcNAc-(1-&gt;4)-Mur2Ac(oyl-L-Ala-gamma-D-Glu-L-Lys-D-Ala-D-Ala)-di-trans,octa-cis-undecaprenyl diphosphate + UDP + H(+). The protein operates within cell wall biogenesis; peptidoglycan biosynthesis. Its function is as follows. Cell wall formation. Catalyzes the transfer of a GlcNAc subunit on undecaprenyl-pyrophosphoryl-MurNAc-pentapeptide (lipid intermediate I) to form undecaprenyl-pyrophosphoryl-MurNAc-(pentapeptide)GlcNAc (lipid intermediate II). This is UDP-N-acetylglucosamine--N-acetylmuramyl-(pentapeptide) pyrophosphoryl-undecaprenol N-acetylglucosamine transferase from Streptococcus thermophilus (strain ATCC BAA-491 / LMD-9).